A 360-amino-acid chain; its full sequence is Phospho-N-acetylmuramoyl-pentapeptide-transferase (360 aa).

10 helical membrane-spanning segments follow: residues 21 to 41 (YLTL…ILIG), 73 to 93 (TMGG…WADL), 97 to 117 (YVLV…VDDY), 134 to 154 (YFWQ…SATM), 168 to 188 (VFPQ…VGTS), 199 to 219 (GLAI…AYVT), 239 to 259 (LVIV…FNTY), 263 to 283 (VFMG…LAVL), 288 to 308 (LVLI…ILQV), and 338 to 358 (VIVR…ATLK).

The protein belongs to the glycosyltransferase 4 family. MraY subfamily. It depends on Mg(2+) as a cofactor.

The protein resides in the cell inner membrane. The enzyme catalyses UDP-N-acetyl-alpha-D-muramoyl-L-alanyl-gamma-D-glutamyl-meso-2,6-diaminopimeloyl-D-alanyl-D-alanine + di-trans,octa-cis-undecaprenyl phosphate = di-trans,octa-cis-undecaprenyl diphospho-N-acetyl-alpha-D-muramoyl-L-alanyl-D-glutamyl-meso-2,6-diaminopimeloyl-D-alanyl-D-alanine + UMP. Its pathway is cell wall biogenesis; peptidoglycan biosynthesis. Functionally, catalyzes the initial step of the lipid cycle reactions in the biosynthesis of the cell wall peptidoglycan: transfers peptidoglycan precursor phospho-MurNAc-pentapeptide from UDP-MurNAc-pentapeptide onto the lipid carrier undecaprenyl phosphate, yielding undecaprenyl-pyrophosphoryl-MurNAc-pentapeptide, known as lipid I. This is Phospho-N-acetylmuramoyl-pentapeptide-transferase from Alteromonas mediterranea (strain DSM 17117 / CIP 110805 / LMG 28347 / Deep ecotype).